The primary structure comprises 1690 residues: Collagen alpha-4(IV) chain (1690 aa).

The signal sequence occupies residues 1–38 (MWSLHIVLMRCSFRLTKSLATGPWSLILILFSVQYVYG). The interval 39–64 (SGKKYIGPCGGRDCSVCHCVPEKGSR) is 7S domain. Disordered regions lie at residues 61-173 (KGSR…GEKG) and 187-258 (GDRG…GPTL). The tract at residues 65 to 1459 (GPPGPPGPQG…IGDPGPKGFG (1395 aa)) is triple-helical region. Residues 66–75 (PPGPPGPQGP) are compositionally biased toward pro residues. Low complexity predominate over residues 76–88 (IGPLGAPGPIGLS). The Cell attachment site motif lies at 94-96 (RGD). A glycan (N-linked (GlcNAc...) asparagine) is linked at N142. The Cell attachment site motif lies at 145–147 (RGD). Residues 149 to 164 (GFPGGRGALGPGGPLG) are compositionally biased toward gly residues. The Cell attachment site signature appears at 189 to 191 (RGD). Gly residues predominate over residues 199 to 208 (GSWGAGGPAG). The Cell attachment site signature appears at 310–312 (RGD). 3 disordered regions span residues 369-390 (PGDP…PGPP), 405-451 (GPPG…GLQG), and 469-1457 (GIKG…GPKG). Positions 412-434 (FPGLPGLPGEAGIPGRPDSAPGK) are enriched in low complexity. Composition is skewed to pro residues over residues 498–507 (PMGPPGPPGL) and 529–540 (PGPPGAEGPPGL). Residues 586 to 607 (HGRDGHAGEKGDPGPPGDHEDA) show a composition bias toward basic and acidic residues. Over residues 644 to 655 (PGVPGHPGVRGP) the composition is skewed to low complexity. Residue N669 is glycosylated (N-linked (GlcNAc...) asparagine). The span at 681–690 (FDGPPGPKGF) shows a compositional bias: pro residues. 2 short sequence motifs (cell attachment site) span residues 724 to 726 (RGD) and 785 to 787 (RGD). The span at 849–858 (GAPGGKGQPG) shows a compositional bias: gly residues. Low complexity-rich tracts occupy residues 866 to 880 (AGMK…RPGA) and 907 to 917 (PRGLPGFPGFP). A Cell attachment site motif is present at residues 989–991 (RGD). Residues 1023–1032 (PGPPGPPGPP) show a composition bias toward pro residues. A compositionally biased stretch (low complexity) spans 1108 to 1117 (PGIQGPRGSP). The segment covering 1119–1131 (RPGPPGSSGPPGC) has biased composition (pro residues). A Cell attachment site motif is present at residues 1212–1214 (RGD). Pro residues-rich tracts occupy residues 1220 to 1243 (ISPP…PPGP), 1256 to 1280 (DPGP…PPGL), 1297 to 1309 (PGPP…PGPP), 1338 to 1353 (FPGP…PPGR), and 1443 to 1452 (GPGPPGPIGD). One can recognise a Collagen IV NC1 domain in the interval 1465–1690 (GFLLVLHSQT…SRCQVCVKYS (226 aa)). 6 disulfide bridges follow: C1480–C1569, C1513–C1566, C1525–C1531, C1588–C1686, C1622–C1683, and C1634–C1641.

The protein belongs to the type IV collagen family. In terms of assembly, there are six type IV collagen isoforms, alpha 1(IV)-alpha 6(IV), each of which can form a triple helix structure with 2 other chains to generate type IV collagen network. The alpha 3(IV) chain forms a triple helical protomer with alpha 4(IV) and alpha 5(IV); this triple helical structure dimerizes through NC1-NC1 domain interactions such that the alpha 3(IV), alpha 4(IV) and alpha 5(IV) chains of one protomer connect with the alpha 5(IV), alpha 4(IV) and alpha 3(IV) chains of the opposite protomer, respectively. Associates with LAMB2 at the neuromuscular junction and in GBM. Prolines at the third position of the tripeptide repeating unit (G-X-Y) are hydroxylated in some or all of the chains. Post-translationally, type IV collagens contain numerous cysteine residues which are involved in inter- and intramolecular disulfide bonding. 12 of these, located in the NC1 domain, are conserved in all known type IV collagens. In terms of processing, the trimeric structure of the NC1 domains is stabilized by covalent bonds between Lys and Met residues. Expressed in Bruch's membrane, outer plexiform layer, inner nuclear layer, inner plexiform layer, ganglion cell layer, inner limiting membrane and around the blood vessels of the retina (at protein level). Alpha 3 and alpha 4 type IV collagens are colocalized and present in kidney, eye, basement membranes of lens capsule, cochlea, lung, skeletal muscle, aorta, synaptic fibers, fetal kidney and fetal lung. PubMed:8083201 reports similar levels of expression of alpha 3 and alpha 4 type IV collagens in kidney, but PubMed:7523402 reports that in kidney levels of alpha 3 type IV collagen are significantly lower than those of alpha 4 type IV collagen. Highest levels of expression of alpha 4 type IV collagen are detected in kidney, calvaria, neuroretina and cardiac muscle. Lower levels of expression are observed in brain, lung and thymus, and no expression is detected in choroid plexus, liver, adrenal, pancreas, ileum or skin.

It is found in the secreted. Its subcellular location is the extracellular space. The protein resides in the extracellular matrix. It localises to the basement membrane. Type IV collagen is the major structural component of glomerular basement membranes (GBM), forming a 'chicken-wire' meshwork together with laminins, proteoglycans and entactin/nidogen. This is Collagen alpha-4(IV) chain (COL4A4) from Homo sapiens (Human).